Here is a 111-residue protein sequence, read N- to C-terminus: Toxin 3FTx-Tri3 (111 aa).

An N-terminal signal peptide occupies residues 1-19; it reads MKTLLLALVVVAFMCLGSA. A propeptide spanning residues 20-34 is cleaved from the precursor; the sequence is DEVGLGNEQIDRGRR. Residue Gln35 is modified to Pyrrolidone carboxylic acid. 4 disulfides stabilise this stretch: Cys44-Cys68, Cys47-Cys87, Cys91-Cys102, and Cys103-Cys108.

The protein belongs to the three-finger toxin family. Ancestral subfamily. Boigatoxin sub-subfamily. In terms of tissue distribution, expressed by the venom gland.

It localises to the secreted. Its function is as follows. Potent postsynaptic neurotoxin. Displays readily reversible competitive antagonism at the nicotinic acetylcholine receptor (nAChR). In Trimorphodon biscutatus (Western lyre snake), this protein is Toxin 3FTx-Tri3.